A 383-amino-acid polypeptide reads, in one-letter code: Caspase a (383 aa).

Positions 1 to 142 (MAKSIKDHLQ…ETYEIKDKSV (142 aa)) are excised as a propeptide. One can recognise a Pyrin domain in the interval 8 to 81 (HLQDALSNIG…RGIKCNAVAE (74 aa)). The tract at residues 87–106 (TGQGGVSQPEPPVPEPIPKD) is disordered. Active-site residues include histidine 220 and cysteine 270. Residues 275-296 (HGRVWASDGEPDEPIEIEDDDF) constitute a propeptide that is removed on maturation.

Belongs to the peptidase C14A family. Heterotetramer that consists of two anti-parallel arranged heterodimers, each one formed by a 20 kDa (p20) and a 10 kDa (p10) subunit. Interacts (via pyrin domain) with pycard (via pyrin domain). Interacts with caspb. Component of NLRP1 inflammasomes. Inflammasomes are supramolecular complexes that assemble in the cytosol in response to pathogens and other damage-associated signals and play critical roles in innate immunity and inflammation. The NLRP1 inflammasome is composed of the signal sensor nlrp1, and the adapter pycard (asc), which recruit effector pro-inflammatory caspases caspa and/or caspb. The interaction between nlrp1 and pycard is required for the sequential recruitment of caspa and then caspb. Caspa is preferentially recruited first and this causes the cleavage of pro-il1b into the midformed il1b. This is followed by the recruitment of caspb, which is activated and cleaves the midformed il1b resulting in il1b maturation. Interacts with caiap. The two subunits are derived from the precursor sequence by an autocatalytic mechanism.

It localises to the inflammasome. The protein resides in the cytoplasm. The catalysed reaction is Strict requirement for an Asp residue at position P1 and has a preferred cleavage sequence of Tyr-Val-Ala-Asp-|-.. Its function is as follows. Thiol protease which cleaves IL-1 beta (il1b), releasing the mature cytokine which is involved in a variety of inflammatory processes, and mediates apoptosis. Component of the NLRP1 inflammasome, which plays a crucial role in innate immunity and inflammation. In response to pathogens and other damage-associated signals, recruited to the NLRP1 inflammasome in its precursor form. Its subsequent activation causes the cleavage of pro-il1b into the midformed il1b, which then evetually leads to il1b maturation and secretion in the extracellular milieu. Required for the development of the cartilaginous pharyngeal skeleton. This is Caspase a from Danio rerio (Zebrafish).